Reading from the N-terminus, the 735-residue chain is Alpha-adducin (735 aa).

An N-acetylmethionine modification is found at M1. Low complexity predominate over residues 1–11 (MNGDTRAAVVT). Residues 1 to 21 (MNGDTRAAVVTSPPPTTAPHK) are disordered. Position 12 is a phosphoserine (S12). S59 is modified (phosphoserine; by PKA). S64 is subject to Phosphoserine. Phosphothreonine is present on T331. Phosphoserine is present on residues S334, S353, and S355. Residue T358 is modified to Phosphothreonine. Phosphoserine occurs at positions 364 and 366. The residue at position 408 (S408) is a Phosphoserine; by PKA. Disordered regions lie at residues 418–486 (GHSF…SAVP) and 576–735 (RREV…KSDS). S427 carries the post-translational modification Phosphoserine. T429 bears the Phosphothreonine mark. Phosphoserine is present on S431. Phosphoserine; by PKA is present on S436. T445 carries the phosphothreonine; by ROCK2 modification. Residues S464 and S465 each carry the phosphoserine modification. Residue T480 is modified to Phosphothreonine; by ROCK2. S481 carries the phosphoserine; by PKA modification. The span at 576 to 601 (RREVERKQKGSEENLDETREQKEKSP) shows a compositional bias: basic and acidic residues. Residues S586, S600, and S605 each carry the phosphoserine modification. T610 is modified (phosphothreonine). S613 is subject to Phosphoserine. T614 is subject to Phosphothreonine. Low complexity predominate over residues 678–712 (EPASASAPGAEEVASPATEEGSPMDPGSDGSPGKS). A phosphoserine mark is found at S705, S708, and S712. The span at 713–735 (PSKKKKKFRTPSFLKKSKKKSDS) shows a compositional bias: basic residues. S714 carries the phosphoserine; by PKC modification. The interval 715-732 (KKKKKFRTPSFLKKSKKK) is interaction with calmodulin. S724 is subject to Phosphoserine; by PKA and PKC.

This sequence belongs to the aldolase class II family. Adducin subfamily. Heterodimer of an alpha and a beta subunit or an alpha and a gamma subunit.

It localises to the cytoplasm. It is found in the cytoskeleton. The protein localises to the cell membrane. Membrane-cytoskeleton-associated protein that promotes the assembly of the spectrin-actin network. Binds to calmodulin. This is Alpha-adducin (Add1) from Rattus norvegicus (Rat).